Consider the following 279-residue polypeptide: Methyltransferase prhM (279 aa).

Residues 124–125 (DI) and 152–153 (DV) each bind S-adenosyl-L-methionine.

Belongs to the class I-like SAM-binding methyltransferase superfamily.

Its pathway is secondary metabolite biosynthesis; terpenoid biosynthesis. Methyltransferase; part of the gene cluster that mediates the biosynthesis of paraherquonin, a meroterpenoid with a unique, highly congested hexacyclic molecular architecture. The first step of the pathway is the synthesis of 3,5-dimethylorsellinic acid (DMOA) by the polyketide synthase prhL. Synthesis of DMOA is followed by farnesylation by the prenyltransferase prhE, methylesterification by the methyl-transferase prhM, epoxidation of the prenyl chain by the flavin-dependent monooxygenase prhF, and cyclization of the farnesyl moiety by the terpene cyclase prhH, to yield the tetracyclic intermediate, protoaustinoid A. The short chain dehydrogenase prhI then oxidizes the C-3 alcohol group of the terpene cyclase product to transform protoaustinoid A into protoaustinoid B. The FAD-binding monooxygenase prhJ catalyzes the oxidation of protoaustinoid B into preaustinoid A which is further oxidized into preaustinoid A1 by FAD-binding monooxygenase phrK. Finally, prhA leads to berkeleydione via the berkeleyone B intermediate. PrhA is a multifunctional dioxygenase that first desaturates at C5-C6 to form berkeleyone B, followed by rearrangement of the A/B-ring to form the cycloheptadiene moiety in berkeleydione. Berkeleydione serves as the key intermediate for the biosynthesis of paraherquonin as well as many other meroterpenoids. The cytochrome P450 monooxygenases prhB, prhD, and prhN, as well as the isomerase prhC, are probably involved in the late stage of paraherquonin biosynthesis, after the production of berkeleydione. Especially prhC might be a multifunctional enzyme that catalyzes the D-ring expansion via intramolecular methoxy rearrangement, as well as the hydrolysis of the expanded D-ring. The chain is Methyltransferase prhM from Penicillium brasilianum.